We begin with the raw amino-acid sequence, 276 residues long: NAD-capped RNA hydrolase NudC (276 aa).

Residue R82 coordinates substrate. The Zn(2+) site is built by C112 and C115. E125 provides a ligand contact to substrate. Zn(2+)-binding residues include C130 and C133. Y138 is a binding site for substrate. One can recognise a Nudix hydrolase domain in the interval 139-262; that stretch reads PRISPSMIVL…SIARYLIDLY (124 aa). Residues A172, E188, and E192 each contribute to the a divalent metal cation site. The Nudix box signature appears at 173-194; that stretch reads GFAEPGESAEDCLVREVREEVA. 206–213 contacts substrate; sequence QCWPFPHS. An a divalent metal cation-binding site is contributed by E233. Residue A255 participates in substrate binding.

It belongs to the Nudix hydrolase family. NudC subfamily. Homodimer. Mg(2+) serves as cofactor. It depends on Mn(2+) as a cofactor. Requires Zn(2+) as cofactor.

It catalyses the reaction a 5'-end NAD(+)-phospho-ribonucleoside in mRNA + H2O = a 5'-end phospho-adenosine-phospho-ribonucleoside in mRNA + beta-nicotinamide D-ribonucleotide + 2 H(+). It carries out the reaction NAD(+) + H2O = beta-nicotinamide D-ribonucleotide + AMP + 2 H(+). The enzyme catalyses NADH + H2O = reduced beta-nicotinamide D-ribonucleotide + AMP + 2 H(+). Functionally, mRNA decapping enzyme that specifically removes the nicotinamide adenine dinucleotide (NAD) cap from a subset of mRNAs by hydrolyzing the diphosphate linkage to produce nicotinamide mononucleotide (NMN) and 5' monophosphate mRNA. The NAD-cap is present at the 5'-end of some mRNAs and stabilizes RNA against 5'-processing. Has preference for mRNAs with a 5'-end purine. Catalyzes the hydrolysis of a broad range of dinucleotide pyrophosphates. This is NAD-capped RNA hydrolase NudC from Pseudomonas putida (strain ATCC 700007 / DSM 6899 / JCM 31910 / BCRC 17059 / LMG 24140 / F1).